The primary structure comprises 225 residues: UPF0173 metal-dependent hydrolase PAE2160 (225 aa).

The protein belongs to the UPF0173 family.

This chain is UPF0173 metal-dependent hydrolase PAE2160, found in Pyrobaculum aerophilum (strain ATCC 51768 / DSM 7523 / JCM 9630 / CIP 104966 / NBRC 100827 / IM2).